A 492-amino-acid chain; its full sequence is Glutamyl-tRNA(Gln) amidotransferase subunit A (492 aa).

Residues lysine 78 and serine 158 each act as charge relay system in the active site. Serine 182 (acyl-ester intermediate) is an active-site residue.

It belongs to the amidase family. GatA subfamily. Heterotrimer of A, B and C subunits.

It catalyses the reaction L-glutamyl-tRNA(Gln) + L-glutamine + ATP + H2O = L-glutaminyl-tRNA(Gln) + L-glutamate + ADP + phosphate + H(+). Its function is as follows. Allows the formation of correctly charged Gln-tRNA(Gln) through the transamidation of misacylated Glu-tRNA(Gln) in organisms which lack glutaminyl-tRNA synthetase. The reaction takes place in the presence of glutamine and ATP through an activated gamma-phospho-Glu-tRNA(Gln). In Rhodopseudomonas palustris (strain HaA2), this protein is Glutamyl-tRNA(Gln) amidotransferase subunit A.